Reading from the N-terminus, the 584-residue chain is DNA damage-binding protein 2 (584 aa).

Residues 1-87 (MGPTTRARFV…PVAAAARSGR (87 aa)) are disordered. Positions 8–20 (RFVHNRRRRRRRG) are enriched in basic residues. Composition is skewed to acidic residues over residues 25-35 (PDDDDEEEDQQ) and 45-66 (DEGE…DGEA). The CCHC-type zinc-finger motif lies at 122 to 140 (KPCFLCKMPGGHTTLTCPH). WD repeat units follow at residues 192-232 (FHQR…EKIT), 236-278 (VHSC…SLLN), 288-327 (STWR…RIGD), 333-373 (KKGS…PNSA), 378-418 (AHGR…LESP), 438-481 (EWDP…LAEV), and 484-523 (PDIT…DATE). The short motif at 351-366 (LLSSGNDHYARIWDTR) is the DWD box element. The span at 517 to 532 (TESDATEERNREKAKE) shows a compositional bias: basic and acidic residues. The segment at 517–584 (TESDATEERN…TIKGKGKSKV (68 aa)) is disordered. Basic residues predominate over residues 562–584 (KKKKKAKKTRFTHTIKGKGKSKV).

The protein belongs to the WD repeat DDB2/WDR76 family. In terms of assembly, component of the UV-DDB complex, which is composed of DDB1 and DDB2. In terms of tissue distribution, expressed in proliferating tissues such as shoot apical meristem (SAM), root tips and young leaves. Not detected in mature leaves.

The protein resides in the nucleus. Functionally, required for DNA repair. Binds to DDB1 to form the UV-damaged DNA-binding protein complex (the UV-DDB complex). The UV-DDB complex may recognize UV-induced DNA damage and recruit proteins of the nucleotide excision repair pathway (the NER pathway) to initiate DNA repair. May function as the substrate recognition module for a DCX (DDB1-CUL4-X-box) E3 ubiquitin-protein ligase complex. This Oryza sativa subsp. japonica (Rice) protein is DNA damage-binding protein 2.